A 585-amino-acid chain; its full sequence is Potassium-transporting ATPase potassium-binding subunit (585 aa).

The next 12 membrane-spanning stretches (helical) occupy residues 25-45 (IIIFIYLGITSIFSYVLSFYI), 84-104 (YFINLLLFNFFAGLISFLVIM), 152-172 (FVITGLMFLSAGTGFAASMAF), 194-214 (IFDLILPLSILVTIILILAGV), 275-295 (LEFVSFTIIPLGSLMALGIVF), 307-327 (VIMFFFVFDGLFAFFGEYVGV), 345-365 (AIGVSQSSIFAVGATLTSTGA), 368-388 (GALVSYTPAGIIGVLIGLLLN), 397-417 (GVLNIFMYIIFTVFIGSLMVG), 437-457 (LSLVTHPLLVVIPLGITLMIP), 502-522 (LDGVIMLLGRYLLMGFQLVIA), and 547-567 (LLLISAMLIIGLLSYFPIIVL).

This sequence belongs to the KdpA family. As to quaternary structure, the system is composed of three essential subunits: KdpA, KdpB and KdpC.

Its subcellular location is the cell membrane. Part of the high-affinity ATP-driven potassium transport (or Kdp) system, which catalyzes the hydrolysis of ATP coupled with the electrogenic transport of potassium into the cytoplasm. This subunit binds the extracellular potassium ions and delivers the ions to the membrane domain of KdpB through an intramembrane tunnel. In Thermoplasma volcanium (strain ATCC 51530 / DSM 4299 / JCM 9571 / NBRC 15438 / GSS1), this protein is Potassium-transporting ATPase potassium-binding subunit.